The sequence spans 653 residues: Elongation factor 4 (653 aa).

The segment at 1-30 (MRTPCSQHRRDRPSAIGSQLPDADTLDTRQ) is disordered. One can recognise a tr-type G domain in the interval 50–231 (AQIRNFCIIA…EVVRQVPPPQ (182 aa)). Residues 62 to 67 (DHGKST) and 178 to 181 (NKID) contribute to the GTP site.

Belongs to the TRAFAC class translation factor GTPase superfamily. Classic translation factor GTPase family. LepA subfamily.

It localises to the cell membrane. The enzyme catalyses GTP + H2O = GDP + phosphate + H(+). Its function is as follows. Required for accurate and efficient protein synthesis under certain stress conditions. May act as a fidelity factor of the translation reaction, by catalyzing a one-codon backward translocation of tRNAs on improperly translocated ribosomes. Back-translocation proceeds from a post-translocation (POST) complex to a pre-translocation (PRE) complex, thus giving elongation factor G a second chance to translocate the tRNAs correctly. Binds to ribosomes in a GTP-dependent manner. The protein is Elongation factor 4 of Mycobacterium bovis (strain ATCC BAA-935 / AF2122/97).